We begin with the raw amino-acid sequence, 141 residues long: Large ribosomal subunit protein uL11 (141 aa).

Belongs to the universal ribosomal protein uL11 family. As to quaternary structure, part of the ribosomal stalk of the 50S ribosomal subunit. Interacts with L10 and the large rRNA to form the base of the stalk. L10 forms an elongated spine to which L12 dimers bind in a sequential fashion forming a multimeric L10(L12)X complex. One or more lysine residues are methylated.

In terms of biological role, forms part of the ribosomal stalk which helps the ribosome interact with GTP-bound translation factors. The chain is Large ribosomal subunit protein uL11 from Ruegeria sp. (strain TM1040) (Silicibacter sp.).